A 368-amino-acid chain; its full sequence is Single-stranded DNA-binding protein 3 (368 aa).

The 33-residue stretch at 16 to 48 (AREKLALYVYEYLLHVGAQKSAQTFLSEIRWEK) folds into the LisH domain. The segment at 100 to 368 (PVLGNIPPND…NYSPSMTMSV (269 aa)) is disordered. The segment covering 126-139 (GSQPSPHAQPPPHN) has biased composition (pro residues). 3 stretches are compositionally biased toward low complexity: residues 174–189 (PNMGGPMQRMNPPRGM), 211–220 (GPGMPGINMG), and 230–248 (PSSANSIPYSSSSPGTYVG). The segment covering 252–262 (GGGPPGTPIMP) has biased composition (pro residues). The segment covering 265–276 (ADSTNSSDNIYT) has biased composition (polar residues). The span at 295 to 305 (GSDGPMGGMGG) shows a compositional bias: gly residues. The span at 326–337 (NSPNNISGISNP) shows a compositional bias: low complexity. A compositionally biased stretch (polar residues) spans 353–368 (HSFQNDNYSPSMTMSV).

In terms of tissue distribution, expressed in embryonic fibroblasts and chondrocytes.

The protein resides in the nucleus. Its function is as follows. May be involved in transcription regulation of the alpha 2(I) collagen gene where it binds to the single-stranded polypyrimidine sequences in the promoter region. The protein is Single-stranded DNA-binding protein 3 (SSBP3) of Gallus gallus (Chicken).